The primary structure comprises 290 residues: Bifunctional protein FolD (290 aa).

NADP(+) is bound by residues Gly166 to Ser168 and Ile232.

Belongs to the tetrahydrofolate dehydrogenase/cyclohydrolase family. As to quaternary structure, homodimer.

It carries out the reaction (6R)-5,10-methylene-5,6,7,8-tetrahydrofolate + NADP(+) = (6R)-5,10-methenyltetrahydrofolate + NADPH. The catalysed reaction is (6R)-5,10-methenyltetrahydrofolate + H2O = (6R)-10-formyltetrahydrofolate + H(+). The protein operates within one-carbon metabolism; tetrahydrofolate interconversion. Its function is as follows. Catalyzes the oxidation of 5,10-methylenetetrahydrofolate to 5,10-methenyltetrahydrofolate and then the hydrolysis of 5,10-methenyltetrahydrofolate to 10-formyltetrahydrofolate. This Proteus mirabilis (strain HI4320) protein is Bifunctional protein FolD.